The sequence spans 625 residues: ATP-dependent RNA helicase mrh4, mitochondrial (625 aa).

A mitochondrion-targeting transit peptide spans 1–16 (MWKTARDSVCLICRSA). Over residues 19–28 (TTTSTSARAS) the composition is skewed to low complexity. The disordered stretch occupies residues 19–119 (TTTSTSARAS…DKNTKGQKAL (101 aa)). Basic and acidic residues predominate over residues 90-113 (DPRKAPKPKPVEEDSRRDKRDKNT). The short motif at 144-177 (QAFDQFDLLPVVKEAIAQEALKGMTEIKPTPVQR) is the Q motif element. Residues 195 to 406 (PKSDNGREEF…EEQFPYINRI (212 aa)) form the Helicase ATP-binding domain. ATP is bound at residue 208-215 (AETGSGKT). The DEAD box motif lies at 353 to 356 (DEAD). The 173-residue stretch at 453–625 (EGPKSEIDVK…ESMFMGQALV (173 aa)) folds into the Helicase C-terminal domain.

It belongs to the DEAD box helicase family. MRH4 subfamily.

Its subcellular location is the mitochondrion. It carries out the reaction ATP + H2O = ADP + phosphate + H(+). In terms of biological role, ATP-binding RNA helicase involved in mitochondrial RNA metabolism. Required for maintenance of mitochondrial DNA. This Neurospora crassa (strain ATCC 24698 / 74-OR23-1A / CBS 708.71 / DSM 1257 / FGSC 987) protein is ATP-dependent RNA helicase mrh4, mitochondrial (drh-15).